The chain runs to 316 residues: Phosphate acyltransferase (316 aa).

This sequence belongs to the PlsX family. As to quaternary structure, homodimer. Probably interacts with PlsY.

It localises to the cytoplasm. It catalyses the reaction a fatty acyl-[ACP] + phosphate = an acyl phosphate + holo-[ACP]. Its pathway is lipid metabolism; phospholipid metabolism. Functionally, catalyzes the reversible formation of acyl-phosphate (acyl-PO(4)) from acyl-[acyl-carrier-protein] (acyl-ACP). This enzyme utilizes acyl-ACP as fatty acyl donor, but not acyl-CoA. This Chlamydia abortus (strain DSM 27085 / S26/3) (Chlamydophila abortus) protein is Phosphate acyltransferase.